Consider the following 472-residue polypeptide: Transmembrane protein 8B (472 aa).

A disordered region spans residues 1–36; the sequence is MNMPQSLGNQPLPPEPPSLGTPAEGPGTTSPPEHCW. The Extracellular portion of the chain corresponds to 1-233; that stretch reads MNMPQSLGNQ…ADALTYGFQL (233 aa). Asn-92 and Asn-100 each carry an N-linked (GlcNAc...) asparagine glycan. Residues 182-221 form the EGF-like domain; the sequence is FLSPCVDDCGPYGQCKLLRTHNYLYAACECKAGWRGWGCT. Cystine bridges form between Cys-186–Cys-196, Cys-190–Cys-209, and Cys-211–Cys-220. Residues 234-254 traverse the membrane as a helical segment; that stretch reads LSTLLLCLSNLMFLPPVVLAI. At 255–257 the chain is on the cytoplasmic side; it reads RSR. Residues 258 to 277 traverse the membrane as a helical segment; that stretch reads YVLEAAVYTFTMFFSTFYHA. The Extracellular portion of the chain corresponds to 278-292; it reads CDQPGIVVFCIMDYD. A helical membrane pass occupies residues 293–313; it reads VLQFCDFLGSLMSVWVTVIAM. Over 314-315 the chain is Cytoplasmic; sequence AR. Residues 316 to 336 traverse the membrane as a helical segment; the sequence is LQPVVKQVLYLLGAMLLSMAL. Residues 337 to 342 are Extracellular-facing; the sequence is QLDRHG. A helical membrane pass occupies residues 343-363; the sequence is LWNLLGPSLFALGILATAWTV. Topologically, residues 364-379 are cytoplasmic; the sequence is RSVRRRHCYPPTWRRW. The helical transmembrane segment at 380–400 threads the bilayer; sequence LFYLCPGSLIAGSAVLLYAFV. The Extracellular segment spans residues 401-405; sequence ETRDN. Residues 406 to 426 traverse the membrane as a helical segment; sequence YFYIHSIWHMLIAGSVGFLLP. The Cytoplasmic segment spans residues 427 to 472; the sequence is PRAKTDHGVPSGARARGCGYQLCINEQEELGLVGPGGATVSSICAS.

This sequence belongs to the TMEM8 family. As to quaternary structure, isoform 2 (via its cytoplasmic part) interacts with EZR. In terms of processing, isoform 2 is N-glycosylated.

The protein localises to the cell membrane. It is found in the cytoplasm. The protein resides in the nucleus. Its subcellular location is the mitochondrion. It localises to the endoplasmic reticulum. Functionally, may function as a regulator of the EGFR pathway. Probable tumor suppressor which may function in cell growth, proliferation and adhesion. The protein is Transmembrane protein 8B (TMEM8B) of Homo sapiens (Human).